The following is a 716-amino-acid chain: Fatty acid oxidation complex subunit alpha (716 aa).

Positions 1-189 are enoyl-CoA hydratase/isomerase; the sequence is MIYQSPTIQV…KVGAVDAVVA (189 aa). Position 296 (D296) interacts with substrate. The segment at 311–716 is 3-hydroxyacyl-CoA dehydrogenase; that stretch reads KAVNSAAVLG…AANNGSYYQA (406 aa). NAD(+)-binding positions include M324, D343, 400 to 402, K407, and S429; that span reads VVE. The active-site For 3-hydroxyacyl-CoA dehydrogenase activity is H450. NAD(+) is bound at residue N453. Substrate contacts are provided by N500 and Y660.

In the N-terminal section; belongs to the enoyl-CoA hydratase/isomerase family. It in the C-terminal section; belongs to the 3-hydroxyacyl-CoA dehydrogenase family. Heterotetramer of two alpha chains (FadB) and two beta chains (FadA).

It carries out the reaction a (3S)-3-hydroxyacyl-CoA + NAD(+) = a 3-oxoacyl-CoA + NADH + H(+). The enzyme catalyses a (3S)-3-hydroxyacyl-CoA = a (2E)-enoyl-CoA + H2O. The catalysed reaction is a 4-saturated-(3S)-3-hydroxyacyl-CoA = a (3E)-enoyl-CoA + H2O. It catalyses the reaction (3S)-3-hydroxybutanoyl-CoA = (3R)-3-hydroxybutanoyl-CoA. It carries out the reaction a (3Z)-enoyl-CoA = a 4-saturated (2E)-enoyl-CoA. The enzyme catalyses a (3E)-enoyl-CoA = a 4-saturated (2E)-enoyl-CoA. It functions in the pathway lipid metabolism; fatty acid beta-oxidation. Its function is as follows. Involved in the aerobic and anaerobic degradation of long-chain fatty acids via beta-oxidation cycle. Catalyzes the formation of 3-oxoacyl-CoA from enoyl-CoA via L-3-hydroxyacyl-CoA. It can also use D-3-hydroxyacyl-CoA and cis-3-enoyl-CoA as substrate. This Shewanella oneidensis (strain ATCC 700550 / JCM 31522 / CIP 106686 / LMG 19005 / NCIMB 14063 / MR-1) protein is Fatty acid oxidation complex subunit alpha.